A 281-amino-acid chain; its full sequence is UPF0162 protein PD_0709 (281 aa).

TPR repeat units lie at residues 193–226 (VRIL…VPNQ) and 227–260 (PEAL…YPST).

It belongs to the UPF0162 family.

The protein is UPF0162 protein PD_0709 of Xylella fastidiosa (strain Temecula1 / ATCC 700964).